The primary structure comprises 121 residues: Large ribosomal subunit protein bL20 (121 aa).

The protein belongs to the bacterial ribosomal protein bL20 family.

Functionally, binds directly to 23S ribosomal RNA and is necessary for the in vitro assembly process of the 50S ribosomal subunit. It is not involved in the protein synthesizing functions of that subunit. This chain is Large ribosomal subunit protein bL20, found in Dinoroseobacter shibae (strain DSM 16493 / NCIMB 14021 / DFL 12).